Reading from the N-terminus, the 308-residue chain is Taste receptor type 2 member 43 (308 aa).

A topological domain (extracellular) is located at residue Met-1. A helical transmembrane segment spans residues Ile-2–Cys-22. Residues Ala-23–Gln-46 lie on the Cytoplasmic side of the membrane. Residues Ile-47–Tyr-67 traverse the membrane as a helical segment. Topologically, residues Ala-68 to Asn-86 are extracellular. A helical membrane pass occupies residues Leu-87–Leu-107. The Cytoplasmic portion of the chain corresponds to Leu-108–Lys-126. The chain crosses the membrane as a helical span at residues Ser-127–Val-147. At Asn-148–Thr-178 the chain is on the extracellular side. N-linked (GlcNAc...) asparagine glycosylation is found at Asn-161 and Asn-176. The helical transmembrane segment at Val-179–Ile-199 threads the bilayer. Over Cys-200–Gln-229 the chain is Cytoplasmic. Residues Thr-230 to Trp-249 form a helical membrane-spanning segment. Topologically, residues Ser-250–Ala-258 are extracellular. The chain crosses the membrane as a helical span at residues Val-259–Ile-279. Over Trp-280–Pro-308 the chain is Cytoplasmic.

It belongs to the G-protein coupled receptor T2R family.

It localises to the membrane. The protein resides in the cell projection. The protein localises to the cilium membrane. Gustducin-coupled receptor immplicated in the perception of bitter compounds in the oral cavity and the gastrointestinal tract. Signals through PLCB2 and the calcium-regulated cation channel TRPM5. Activated by the sulfonyl amide sweeteners saccharin and acesulfame K. In airway epithelial cells, binding of bitter compounds increases the intracellular calcium ion concentration and stimulates ciliary beat frequency. May act as chemosensory receptors in airway epithelial cells to detect and eliminate potential noxious agents from the airways. The protein is Taste receptor type 2 member 43 (TAS2R43) of Papio hamadryas (Hamadryas baboon).